A 706-amino-acid chain; its full sequence is Phosphatase and actin regulator 4 (706 aa).

Residues 42-67 form an RPEL 1 repeat; the sequence is EVLERKISMRKPREELVKRGLLVEVP. 4 disordered regions span residues 65–123, 196–380, 385–404, and 459–579; these read EVPE…QPCA, VHPR…HIPV, VPML…QSAS, and LKVP…REEW. Positions 106-121 are enriched in polar residues; sequence DSTGSRPKSGETTVQP. Residues 200–211 are compositionally biased toward basic and acidic residues; that stretch reads HLSEKNSEKYRP. The span at 266–276 shows a compositional bias: polar residues; it reads DPSTRQQSSVP. Over residues 290-299 the composition is skewed to pro residues; sequence KQPPVPPPKP. 3 stretches are compositionally biased toward acidic residues: residues 463 to 476, 508 to 523, and 531 to 541; these read DDDD…DESL, QEEE…DTDS, and EDDEEEEEEET. Residues 563–579 show a composition bias toward basic and acidic residues; that stretch reads GPHDSNPEFPQRSREEW. RPEL repeat units follow at residues 588–613 and 625–650; these read SQLN…QKNE and RRLT…RFNE.

Belongs to the phosphatase and actin regulator family. As to quaternary structure, binds ppp1ca and actin.

Its subcellular location is the cytoplasm. It localises to the cell projection. The protein resides in the lamellipodium. Regulator of protein phosphatase 1 (PP1) required for neural tube and optic fissure closure, and enteric neural crest cell (ENCCs) migration during development. Acts as an activator of PP1. During neural tube closure, localizes to the ventral neural tube and activates PP1, leading to down-regulate cell proliferation within cranial neural tissue and the neural retina. Also acts as a regulator of migration of enteric neural crest cells (ENCCs) by activating PP1, leading to repression of the integrin signaling through the rho/rock pathway. The sequence is that of Phosphatase and actin regulator 4 (phactr4) from Xenopus tropicalis (Western clawed frog).